The primary structure comprises 208 residues: Large ribosomal subunit protein uL4 (208 aa).

A disordered region spans residues 45–89; it reads RQGTHAHKNRSAVSGGGKKPWRQKGTGRARQGSTRSPQWRGGGTV.

The protein belongs to the universal ribosomal protein uL4 family. In terms of assembly, part of the 50S ribosomal subunit.

In terms of biological role, one of the primary rRNA binding proteins, this protein initially binds near the 5'-end of the 23S rRNA. It is important during the early stages of 50S assembly. It makes multiple contacts with different domains of the 23S rRNA in the assembled 50S subunit and ribosome. Forms part of the polypeptide exit tunnel. In Lactococcus lactis subsp. cremoris (strain MG1363), this protein is Large ribosomal subunit protein uL4.